Consider the following 261-residue polypeptide: MDGKLRADEVAVTKSIIKSSFEMWMDLIEVDVVIVGGGPSGLTAAKYLAEKGVKTLVLERHLSFGGGTWGGGMGFPNIVVEKPADEILRSAGIKLKSVDGEPELFTADSVEVPAKLGVAAIDAGAKILTGIVVEDLILKEDKISGVVIQSYSIEKAGLHVDPITISAKYVIDSTGHDASVVSTLARKNKDLGIEVPGEKSMWAEKGENSLTRNTREIFPGLFVCGMTANAYHAGYRMGAIFGGMYLSGKKCAELILEKLNK.

NAD(+) is bound by residues S40, 59-60, G67, V133, and 159-161; these read ER and HVD. Fe cation is bound by residues D161 and H176. NAD(+)-binding residues include S179 and M226. R236 is a binding site for glycine.

It belongs to the THI4 family. Homooctamer; tetramer of dimers. It depends on Fe(2+) as a cofactor.

It carries out the reaction hydrogen sulfide + glycine + NAD(+) = ADP-5-ethyl-4-methylthiazole-2-carboxylate + nicotinamide + 3 H2O + H(+). Its pathway is cofactor biosynthesis; thiamine diphosphate biosynthesis. Functionally, involved in the biosynthesis of the thiazole moiety of thiamine. Catalyzes the conversion of NAD and glycine to adenosine diphosphate 5-(2-hydroxyethyl)-4-methylthiazole-2-carboxylate (ADT), an adenylated thiazole intermediate, using free sulfide as a source of sulfur. The protein is Thiamine thiazole synthase of Methanococcus vannielii (strain ATCC 35089 / DSM 1224 / JCM 13029 / OCM 148 / SB).